A 207-amino-acid polypeptide reads, in one-letter code: Chloramphenicol acetyltransferase (207 aa).

His-186 acts as the Proton acceptor in catalysis.

It belongs to the chloramphenicol acetyltransferase family. Homotrimer.

The enzyme catalyses chloramphenicol + acetyl-CoA = chloramphenicol 3-acetate + CoA. Its function is as follows. This enzyme is an effector of chloramphenicol resistance in bacteria. This chain is Chloramphenicol acetyltransferase (catP), found in Clostridium perfringens.